The following is a 314-amino-acid chain: tRNA dimethylallyltransferase (314 aa).

An ATP-binding site is contributed by 12–19 (GPTASGKT). 14 to 19 (TASGKT) serves as a coordination point for substrate. 2 interaction with substrate tRNA regions span residues 37 to 40 (DSAQ) and 161 to 165 (QRIQR).

This sequence belongs to the IPP transferase family. In terms of assembly, monomer. Requires Mg(2+) as cofactor.

It carries out the reaction adenosine(37) in tRNA + dimethylallyl diphosphate = N(6)-dimethylallyladenosine(37) in tRNA + diphosphate. Its function is as follows. Catalyzes the transfer of a dimethylallyl group onto the adenine at position 37 in tRNAs that read codons beginning with uridine, leading to the formation of N6-(dimethylallyl)adenosine (i(6)A). This Nitrosococcus oceani (strain ATCC 19707 / BCRC 17464 / JCM 30415 / NCIMB 11848 / C-107) protein is tRNA dimethylallyltransferase.